The following is a 382-amino-acid chain: Intermediate transcription factor 3 large subunit (382 aa).

This sequence belongs to the poxviruses A23 family. As to quaternary structure, heterodimer of a 45 kDa and a 32 kDa subunit.

In terms of biological role, acts with RNA polymerase to initiate transcription from intermediate gene promoters. This chain is Intermediate transcription factor 3 large subunit (VITF3L), found in Monkeypox virus (strain Zaire-96-I-16) (MPX).